The sequence spans 78 residues: UPF0270 protein YE3952 (78 aa).

Belongs to the UPF0270 family.

The sequence is that of UPF0270 protein YE3952 from Yersinia enterocolitica serotype O:8 / biotype 1B (strain NCTC 13174 / 8081).